Consider the following 92-residue polypeptide: PqqA binding protein (92 aa).

It belongs to the PqqD family. In terms of assembly, monomer. Interacts with PqqE.

It participates in cofactor biosynthesis; pyrroloquinoline quinone biosynthesis. Its function is as follows. Functions as a PqqA binding protein and presents PqqA to PqqE, in the pyrroloquinoline quinone (PQQ) biosynthetic pathway. The protein is PqqA binding protein of Xanthomonas euvesicatoria pv. vesicatoria (strain 85-10) (Xanthomonas campestris pv. vesicatoria).